The chain runs to 407 residues: tRNA N6-adenosine threonylcarbamoyltransferase, mitochondrial (407 aa).

Residues 1–30 constitute a mitochondrion transit peptide; sequence MISIKGTGRFLLDNYRIWQRRAFNRPIQLR. Residues His145 and His149 each contribute to the a divalent metal cation site. Substrate-binding positions include 170–174, Asp203, Ala217, Glu221, 328–329, and Ser360; these read LVSGG and SN. Asp361 serves as a coordination point for a divalent metal cation.

This sequence belongs to the KAE1 / TsaD family. Homodimer. A divalent metal cation is required as a cofactor.

The protein resides in the mitochondrion. It carries out the reaction L-threonylcarbamoyladenylate + adenosine(37) in tRNA = N(6)-L-threonylcarbamoyladenosine(37) in tRNA + AMP + H(+). Required for the formation of a threonylcarbamoyl group on adenosine at position 37 (t(6)A37) in mitochondrial tRNAs that read codons beginning with adenine. Probably involved in the transfer of the threonylcarbamoyl moiety of threonylcarbamoyl-AMP (TC-AMP) to the N6 group of A37. Involved in mitochondrial genome maintenance. The sequence is that of tRNA N6-adenosine threonylcarbamoyltransferase, mitochondrial (QRI7) from Saccharomyces cerevisiae (strain ATCC 204508 / S288c) (Baker's yeast).